A 96-amino-acid chain; its full sequence is Protein Vpr (96 aa).

Residues Met1–Leu42 are homooligomerization. Ser79 and Ser96 each carry phosphoserine; by host.

Belongs to the HIV-1 VPR protein family. In terms of assembly, homooligomer, may form homodimer. Interacts with p6-gag region of the Pr55 Gag precursor protein through a (Leu-X-X)4 motif near the C-terminus of the P6gag protein. Interacts with host UNG. May interact with host RAD23A/HHR23A. Interacts with host VPRBP/DCAF1, leading to hijack the CUL4A-RBX1-DDB1-DCAF1/VPRBP complex, mediating ubiquitination of host proteins such as TERT and ZGPAT and arrest of the cell cycle in G2 phase. In terms of processing, phosphorylated on several residues by host. These phosphorylations regulate VPR activity for the nuclear import of the HIV-1 pre-integration complex.

The protein resides in the virion. It localises to the host nucleus. Its subcellular location is the host extracellular space. Its function is as follows. During virus replication, may deplete host UNG protein, and incude G2-M cell cycle arrest. Acts by targeting specific host proteins for degradation by the 26S proteasome, through association with the cellular CUL4A-DDB1 E3 ligase complex by direct interaction with host VPRPB/DCAF-1. Cell cycle arrest reportedly occurs within hours of infection and is not blocked by antiviral agents, suggesting that it is initiated by the VPR carried into the virion. Additionally, VPR induces apoptosis in a cell cycle dependent manner suggesting that these two effects are mechanistically linked. Detected in the serum and cerebrospinal fluid of AIDS patient, VPR may also induce cell death to bystander cells. Functionally, during virus entry, plays a role in the transport of the viral pre-integration (PIC) complex to the host nucleus. This function is crucial for viral infection of non-dividing macrophages. May act directly at the nuclear pore complex, by binding nucleoporins phenylalanine-glycine (FG)-repeat regions. This chain is Protein Vpr, found in Human immunodeficiency virus type 1 group M subtype G (isolate SE6165) (HIV-1).